The chain runs to 100 residues: Urease subunit gamma (100 aa).

It belongs to the urease gamma subunit family. Heterotrimer of UreA (gamma), UreB (beta) and UreC (alpha) subunits. Three heterotrimers associate to form the active enzyme.

The protein resides in the cytoplasm. It catalyses the reaction urea + 2 H2O + H(+) = hydrogencarbonate + 2 NH4(+). The protein operates within nitrogen metabolism; urea degradation; CO(2) and NH(3) from urea (urease route): step 1/1. In Rhodopseudomonas palustris (strain BisA53), this protein is Urease subunit gamma.